The sequence spans 211 residues: Molybdenum cofactor guanylyltransferase (211 aa).

GTP contacts are provided by residues Leu12–Gly14, Lys25, Asn53, Asp71, and Asp101. Residue Asp101 participates in Mg(2+) binding.

This sequence belongs to the MobA family. In terms of assembly, monomer. Requires Mg(2+) as cofactor.

The protein resides in the cytoplasm. It catalyses the reaction Mo-molybdopterin + GTP + H(+) = Mo-molybdopterin guanine dinucleotide + diphosphate. Its function is as follows. Transfers a GMP moiety from GTP to Mo-molybdopterin (Mo-MPT) cofactor (Moco or molybdenum cofactor) to form Mo-molybdopterin guanine dinucleotide (Mo-MGD) cofactor. In Acidovorax sp. (strain JS42), this protein is Molybdenum cofactor guanylyltransferase.